The following is a 221-amino-acid chain: Transcription repressor OFP8 (221 aa).

The segment covering 124–138 has biased composition (acidic residues); the sequence is EDEGDKEESEDDDSD. Positions 124–147 are disordered; that stretch reads EDEGDKEESEDDDSDTLFSSRSFS. An OVATE domain is found at 158-217; it reads VVKKSKDPYEDFRTSMVEMIVERQIFAPAELQQLLQCFLSLNSRQHHKVIVQVFLEIYAT.

In terms of tissue distribution, expressed in roots, rosette and cauline leaves, shoots, stems, flower buds and siliques.

The protein localises to the nucleus. Functionally, transcriptional repressor that regulates multiple aspects of plant growth and development through the regulation of BEL1-LIKE (BLH) and KNOX TALE (KNAT) homeodomain transcription factors. This chain is Transcription repressor OFP8 (OFP8), found in Arabidopsis thaliana (Mouse-ear cress).